The primary structure comprises 363 residues: Phosphoserine aminotransferase (363 aa).

Position 42 (arginine 42) interacts with L-glutamate. The pyridoxal 5'-phosphate site is built by tryptophan 105, threonine 155, aspartate 175, and glutamine 198. Lysine 199 is subject to N6-(pyridoxal phosphate)lysine. Pyridoxal 5'-phosphate is bound at residue asparagine 240–threonine 241.

This sequence belongs to the class-V pyridoxal-phosphate-dependent aminotransferase family. SerC subfamily. Homodimer. Pyridoxal 5'-phosphate serves as cofactor.

The protein resides in the cytoplasm. The enzyme catalyses O-phospho-L-serine + 2-oxoglutarate = 3-phosphooxypyruvate + L-glutamate. The catalysed reaction is 4-(phosphooxy)-L-threonine + 2-oxoglutarate = (R)-3-hydroxy-2-oxo-4-phosphooxybutanoate + L-glutamate. The protein operates within amino-acid biosynthesis; L-serine biosynthesis; L-serine from 3-phospho-D-glycerate: step 2/3. It functions in the pathway cofactor biosynthesis; pyridoxine 5'-phosphate biosynthesis; pyridoxine 5'-phosphate from D-erythrose 4-phosphate: step 3/5. Catalyzes the reversible conversion of 3-phosphohydroxypyruvate to phosphoserine and of 3-hydroxy-2-oxo-4-phosphonooxybutanoate to phosphohydroxythreonine. The chain is Phosphoserine aminotransferase from Janthinobacterium sp. (strain Marseille) (Minibacterium massiliensis).